The following is a 253-amino-acid chain: Imidazole glycerol phosphate synthase subunit HisF (253 aa).

Residues Asp11 and Asp130 contribute to the active site.

The protein belongs to the HisA/HisF family. In terms of assembly, heterodimer of HisH and HisF.

The protein resides in the cytoplasm. The catalysed reaction is 5-[(5-phospho-1-deoxy-D-ribulos-1-ylimino)methylamino]-1-(5-phospho-beta-D-ribosyl)imidazole-4-carboxamide + L-glutamine = D-erythro-1-(imidazol-4-yl)glycerol 3-phosphate + 5-amino-1-(5-phospho-beta-D-ribosyl)imidazole-4-carboxamide + L-glutamate + H(+). The protein operates within amino-acid biosynthesis; L-histidine biosynthesis; L-histidine from 5-phospho-alpha-D-ribose 1-diphosphate: step 5/9. IGPS catalyzes the conversion of PRFAR and glutamine to IGP, AICAR and glutamate. The HisF subunit catalyzes the cyclization activity that produces IGP and AICAR from PRFAR using the ammonia provided by the HisH subunit. This chain is Imidazole glycerol phosphate synthase subunit HisF, found in Acidobacterium capsulatum (strain ATCC 51196 / DSM 11244 / BCRC 80197 / JCM 7670 / NBRC 15755 / NCIMB 13165 / 161).